Consider the following 246-residue polypeptide: 3-oxoacyl-[acyl-carrier-protein] reductase FabG (246 aa).

NADP(+) contacts are provided by residues 11 to 14, 62 to 63, and Asn89; these read GASR and NV. A substrate-binding site is contributed by Ser141. Tyr154 acts as the Proton acceptor in catalysis. NADP(+) contacts are provided by residues 154-158 and Ile187; that span reads YVATK.

Belongs to the short-chain dehydrogenases/reductases (SDR) family. As to quaternary structure, homotetramer.

It carries out the reaction a (3R)-hydroxyacyl-[ACP] + NADP(+) = a 3-oxoacyl-[ACP] + NADPH + H(+). Its pathway is lipid metabolism; fatty acid biosynthesis. Catalyzes the NADPH-dependent reduction of beta-ketoacyl-ACP substrates to beta-hydroxyacyl-ACP products, the first reductive step in the elongation cycle of fatty acid biosynthesis. This is 3-oxoacyl-[acyl-carrier-protein] reductase FabG (fabG) from Staphylococcus aureus (strain Mu50 / ATCC 700699).